A 413-amino-acid chain; its full sequence is Putative syntaxin-5 (413 aa).

Residues 1–391 (MSDFHNIRSR…RYLQNISKNR (391 aa)) lie on the Cytoplasmic side of the membrane. The tract at residues 257 to 290 (KNRRDKFSSGAAVPMGLPSSSSGANVRSKLLQDD) is disordered. Residues 321 to 383 (LEYAQARSNT…DMAHSELVRY (63 aa)) form the t-SNARE coiled-coil homology domain. The helical; Anchor for type IV membrane protein transmembrane segment at 392–412 (WLMIQVFGVLMVFFVVFVLFL) threads the bilayer. A topological domain (extracellular) is located at residue Thr413.

This sequence belongs to the syntaxin family.

The protein localises to the membrane. Its function is as follows. Potentially involved in docking of synaptic vesicles at presynaptic active zones. This is Putative syntaxin-5 (syx-5) from Caenorhabditis elegans.